We begin with the raw amino-acid sequence, 143 residues long: Large ribosomal subunit protein uL15 (143 aa).

The disordered stretch occupies residues 20 to 52 (GRGIGSGKGKTAGRGHKGQHSRAGGYHKVGFEG). The segment covering 30-39 (TAGRGHKGQH) has biased composition (basic residues).

It belongs to the universal ribosomal protein uL15 family. Part of the 50S ribosomal subunit.

Functionally, binds to the 23S rRNA. This chain is Large ribosomal subunit protein uL15, found in Coxiella burnetii (strain CbuK_Q154) (Coxiella burnetii (strain Q154)).